Consider the following 342-residue polypeptide: Methylthioribose-1-phosphate isomerase (342 aa).

Substrate is bound by residues 49-51 (RGA), R86, and Q187. Catalysis depends on D228, which acts as the Proton donor. 238–239 (NK) provides a ligand contact to substrate.

Belongs to the eIF-2B alpha/beta/delta subunits family. MtnA subfamily.

It catalyses the reaction 5-(methylsulfanyl)-alpha-D-ribose 1-phosphate = 5-(methylsulfanyl)-D-ribulose 1-phosphate. It participates in amino-acid biosynthesis; L-methionine biosynthesis via salvage pathway; L-methionine from S-methyl-5-thio-alpha-D-ribose 1-phosphate: step 1/6. In terms of biological role, catalyzes the interconversion of methylthioribose-1-phosphate (MTR-1-P) into methylthioribulose-1-phosphate (MTRu-1-P). This chain is Methylthioribose-1-phosphate isomerase, found in Citrobacter koseri (strain ATCC BAA-895 / CDC 4225-83 / SGSC4696).